A 201-amino-acid polypeptide reads, in one-letter code: Envelope glycoprotein (201 aa).

Residues 1-148 (RRARYKKEPV…FNKSPWFTTL (148 aa)) lie on the Extracellular side of the membrane. Positions 10-30 (VSLTLALLLGGLTMGGIAAGV) are fusion peptide. Residues 39–75 (ATQQFQQLQAAIHDDLKEVEKSITNLEKSLTSLSEVV) adopt a coiled-coil conformation. Residues 76-92 (LQNRRGLDLLFLKEGGL) are immunosuppression. The CX6CC motif lies at 93-101 (CAALKEECC). A helical transmembrane segment spans residues 149–169 (ISTVMGPLIILLLILLFGPCI). C168 carries S-palmitoyl cysteine; by host lipidation. Residues 170 to 201 (LNRLVQFIKDRISVVQALVLTQQYHQLKTIGD) lie on the Cytoplasmic side of the membrane. Residues 193-196 (YHQL) carry the YXXL motif; contains endocytosis signal motif.

The mature envelope protein (Env) consists of a trimer of SU-TM heterodimers attached by a labile interchain disulfide bond. Post-translationally, specific enzymatic cleavages in vivo yield mature proteins. Envelope glycoproteins are synthesized as an inactive precursor that is N-glycosylated and processed likely by host cell furin or by a furin-like protease in the Golgi to yield the mature SU and TM proteins. The cleavage site between SU and TM requires the minimal sequence [KR]-X-[KR]-R. The R-peptide is released from the C-terminus of the cytoplasmic tail of the TM protein upon particle formation as a result of proteolytic cleavage by the viral protease. Cleavage of this peptide is required for TM to become fusogenic. The transmembrane protein is palmitoylated. In terms of processing, the R-peptide is palmitoylated.

It is found in the virion membrane. The protein localises to the host cell membrane. The surface protein (SU) attaches the virus to the host cell by binding to its receptor. This interaction triggers the refolding of the transmembrane protein (TM) and is thought to activate its fusogenic potential by unmasking its fusion peptide. Fusion occurs at the host cell plasma membrane. Functionally, the transmembrane protein (TM) acts as a class I viral fusion protein. Under the current model, the protein has at least 3 conformational states: pre-fusion native state, pre-hairpin intermediate state, and post-fusion hairpin state. During viral and target cell membrane fusion, the coiled coil regions (heptad repeats) assume a trimer-of-hairpins structure, positioning the fusion peptide in close proximity to the C-terminal region of the ectodomain. The formation of this structure appears to drive apposition and subsequent fusion of viral and target cell membranes. Membranes fusion leads to delivery of the nucleocapsid into the cytoplasm. This Mus musculus (Mouse) protein is Envelope glycoprotein (env).